A 321-amino-acid polypeptide reads, in one-letter code: Glycerol-3-phosphate dehydrogenase [NAD(P)+] (321 aa).

The NADPH site is built by W15, R35, and K101. Residues K101 and G129 each contribute to the sn-glycerol 3-phosphate site. NADPH is bound at residue A133. Sn-glycerol 3-phosphate contacts are provided by K184, D237, S247, R248, and N249. The active-site Proton acceptor is K184. R248 lines the NADPH pocket. The NADPH site is built by V268 and E270.

It belongs to the NAD-dependent glycerol-3-phosphate dehydrogenase family.

Its subcellular location is the cytoplasm. It carries out the reaction sn-glycerol 3-phosphate + NAD(+) = dihydroxyacetone phosphate + NADH + H(+). The catalysed reaction is sn-glycerol 3-phosphate + NADP(+) = dihydroxyacetone phosphate + NADPH + H(+). The protein operates within membrane lipid metabolism; glycerophospholipid metabolism. Catalyzes the reduction of the glycolytic intermediate dihydroxyacetone phosphate (DHAP) to sn-glycerol 3-phosphate (G3P), the key precursor for phospholipid synthesis. This Acidiphilium cryptum (strain JF-5) protein is Glycerol-3-phosphate dehydrogenase [NAD(P)+].